We begin with the raw amino-acid sequence, 80 residues long: U-actitoxin-Avd9b (80 aa).

The first 20 residues, methionine 1–alanine 20, serve as a signal peptide directing secretion. Positions glutamate 21–lysine 39 are excised as a propeptide. Positions cysteine 45 to cysteine 80 constitute a ShKT domain. Disulfide bonds link cysteine 45-cysteine 80, cysteine 54-cysteine 73, and cysteine 63-cysteine 77. The interval lysine 68 to tyrosine 69 is crucial for binding to potassium channels.

This sequence belongs to the sea anemone type 1 potassium channel toxin family. Type 1b subfamily.

The protein localises to the secreted. It is found in the nematocyst. Functionally, inhibits voltage-gated potassium channels (Kv1/KCNA). The chain is U-actitoxin-Avd9b from Anemonia viridis (Snakelocks anemone).